The chain runs to 325 residues: MEIFDYDNILLLPRKCRVESRSECDTSVELGERRFRLPVVPANMKTVVDEKICTWLAQNGYFYVMHRFDLDNVQFVKDMHAQGCFASISLGVKQPDYDTVDRFVAEGICPEYITIDIAHGHADSVKNMITYLKAKIPAAFVIAGNVGTPEAVIDLENWGADATKVGIGPGKVCITKLKTGFGTGGWQLSALKWCARVATKPIIADGGIRSHGDIAKSVRFGATMVMVGSLFAGHEESPGKTVEVDGELYKEYYGSASDFNKGEYKHVEGKRILEPIKGKLADTLTEMEQDIQSSISYSGGKKLMDIRKVNYVILGGDNAGEHLLM.

The active-site Thioimidate intermediate is the Cys173. 202 to 225 (IIADGGIRSHGDIAKSVRFGATMV) provides a ligand contact to NADP(+).

It belongs to the IMPDH/GMPR family. GuaC type 2 subfamily.

The enzyme catalyses IMP + NH4(+) + NADP(+) = GMP + NADPH + 2 H(+). Functionally, catalyzes the irreversible NADPH-dependent deamination of GMP to IMP. It functions in the conversion of nucleobase, nucleoside and nucleotide derivatives of G to A nucleotides, and in maintaining the intracellular balance of A and G nucleotides. This chain is GMP reductase, found in Acidovorax sp. (strain JS42).